The sequence spans 407 residues: Inhibin beta B chain (407 aa).

Residues 1–28 (MDGLPGRALGAACLLLLAAGWLGPEAWG) form the signal peptide. Positions 26 to 62 (AWGSPTPPPTPAAPPPPPPPGSPGGSQDTCTSCGGFR) are disordered. A propeptide spanning residues 29 to 292 (SPTPPPTPAA…GDSRHRIRKR (264 aa)) is cleaved from the precursor. Over residues 30 to 47 (PTPPPTPAAPPPPPPPGS) the composition is skewed to pro residues. N93 carries N-linked (GlcNAc...) asparagine glycosylation. 4 disulfides stabilise this stretch: C296–C304, C303–C372, C332–C404, and C336–C406.

It belongs to the TGF-beta family. Dimeric, linked by one or more disulfide bonds. Inhibin B is a dimer of alpha and beta-B. Activin B is a homodimer of beta-B. Activin AB is a dimer of beta-A and beta-B. Interacts with FST and FSTL3. Activin B interacts with BMPR2.

It localises to the secreted. In terms of biological role, inhibins and activins inhibit and activate, respectively, the secretion of follitropin by the pituitary gland. Inhibins/activins are involved in regulating a number of diverse functions such as hypothalamic and pituitary hormone secretion, gonadal hormone secretion, germ cell development and maturation, erythroid differentiation, insulin secretion, nerve cell survival, embryonic axial development or bone growth, depending on their subunit composition. Inhibins appear to oppose the functions of activins. Its function is as follows. Activin B is a dimer of alpha and beta-B that plays a role in several essential biological processes including embryonic development, stem cell maintenance and differentiation, haematopoiesis, cell proliferation and wound healing. Signals through type I receptor ACVR1C, abundantly expressed in pancreatic beta cells, and type II receptors like ACVR2A or BMPR2. Upon ligand binding, these receptors phosphorylate intracellular signaling mediators SMAD2 and SMAD3, which form a complex with SMAD4, translocate to the nucleus, and regulate gene expression. Plays a crucial role in the induction of hepcidin by inflammation through activation of ACVR1C and subsequent phosphorylation of SMAD1/5/8. Regulates adipocyte lipid metabolism by decreasing non-esterified fatty acids and glycerol release and increases intracellular triglyceride content. Stimulates wound healing by promoting cell migration and hair follicle regeneration through the JNK and ERK signaling pathways downstream of RHOA. Inhibin B is a dimer of alpha and beta-B that plays a crucial role in the regulation of the reproductive system by inhibiting the secretion of follicle-stimulating hormone (FSH) from the anterior pituitary gland. Thereby, maintains reproductive homeostasis in both males and females. Acts as a more potent suppressor of FSH release than inhibin A. Functions as competitive receptor antagonist binding activin type II receptors with high affinity in the presence of the TGF-beta type III coreceptor/TGFBR3L. This chain is Inhibin beta B chain (INHBB), found in Homo sapiens (Human).